Reading from the N-terminus, the 190-residue chain is 3-isopropylmalate dehydratase small subunit (190 aa).

It belongs to the LeuD family. LeuD type 1 subfamily. In terms of assembly, heterodimer of LeuC and LeuD.

It carries out the reaction (2R,3S)-3-isopropylmalate = (2S)-2-isopropylmalate. It participates in amino-acid biosynthesis; L-leucine biosynthesis; L-leucine from 3-methyl-2-oxobutanoate: step 2/4. Its function is as follows. Catalyzes the isomerization between 2-isopropylmalate and 3-isopropylmalate, via the formation of 2-isopropylmaleate. The polypeptide is 3-isopropylmalate dehydratase small subunit (Staphylococcus aureus (strain MSSA476)).